The following is a 377-amino-acid chain: Succinyl-diaminopimelate desuccinylase 2 (377 aa).

His62 provides a ligand contact to Zn(2+). Asp64 is a catalytic residue. Asp95 is a binding site for Zn(2+). Glu129 acts as the Proton acceptor in catalysis. Residues Glu130, Glu158, and His350 each coordinate Zn(2+).

This sequence belongs to the peptidase M20A family. DapE subfamily. As to quaternary structure, homodimer. Zn(2+) serves as cofactor. It depends on Co(2+) as a cofactor.

It catalyses the reaction N-succinyl-(2S,6S)-2,6-diaminopimelate + H2O = (2S,6S)-2,6-diaminopimelate + succinate. It functions in the pathway amino-acid biosynthesis; L-lysine biosynthesis via DAP pathway; LL-2,6-diaminopimelate from (S)-tetrahydrodipicolinate (succinylase route): step 3/3. Its function is as follows. Catalyzes the hydrolysis of N-succinyl-L,L-diaminopimelic acid (SDAP), forming succinate and LL-2,6-diaminopimelate (DAP), an intermediate involved in the bacterial biosynthesis of lysine and meso-diaminopimelic acid, an essential component of bacterial cell walls. In Shewanella loihica (strain ATCC BAA-1088 / PV-4), this protein is Succinyl-diaminopimelate desuccinylase 2.